Consider the following 122-residue polypeptide: NADPH-dependent 7-cyano-7-deazaguanine reductase (122 aa).

The Thioimide intermediate role is filled by Cys34. The active-site Proton donor is the Asp41. Substrate contacts are provided by residues 56-58 (VEL) and 75-76 (HE).

It belongs to the GTP cyclohydrolase I family. QueF type 1 subfamily.

It is found in the cytoplasm. The enzyme catalyses 7-aminomethyl-7-carbaguanine + 2 NADP(+) = 7-cyano-7-deazaguanine + 2 NADPH + 3 H(+). It participates in tRNA modification; tRNA-queuosine biosynthesis. In terms of biological role, catalyzes the NADPH-dependent reduction of 7-cyano-7-deazaguanine (preQ0) to 7-aminomethyl-7-deazaguanine (preQ1). The chain is NADPH-dependent 7-cyano-7-deazaguanine reductase from Anaeromyxobacter dehalogenans (strain 2CP-1 / ATCC BAA-258).